A 71-amino-acid chain; its full sequence is Keratin-associated protein 6-1 (71 aa).

This sequence belongs to the KRTAP type 6 family. In terms of assembly, interacts with hair keratins.

Its function is as follows. In the hair cortex, hair keratin intermediate filaments are embedded in an interfilamentous matrix, consisting of hair keratin-associated proteins (KRTAP), which are essential for the formation of a rigid and resistant hair shaft through their extensive disulfide bond cross-linking with abundant cysteine residues of hair keratins. The matrix proteins include the high-sulfur and high-glycine-tyrosine keratins. The sequence is that of Keratin-associated protein 6-1 (KRTAP6-1) from Homo sapiens (Human).